Consider the following 293-residue polypeptide: Protease HtpX (293 aa).

2 helical membrane passes run phenylalanine 2 to leucine 22 and leucine 38 to phenylalanine 58. Histidine 145 provides a ligand contact to Zn(2+). Glutamate 146 is a catalytic residue. Histidine 149 serves as a coordination point for Zn(2+). Transmembrane regions (helical) follow at residues valine 156–isoleucine 176 and isoleucine 193–isoleucine 213. Glutamate 222 is a binding site for Zn(2+).

Belongs to the peptidase M48B family. Requires Zn(2+) as cofactor.

It localises to the cell inner membrane. The protein is Protease HtpX of Hahella chejuensis (strain KCTC 2396).